Consider the following 465-residue polypeptide: Uridine kinase-like protein 5 (465 aa).

The tract at residues 26–230 (LKQPFVIGVA…IVQHIRTKLC (205 aa)) is uridine kinase. Residues 240 to 465 (NIFIISSTFQ…SLSTNLKLRS (226 aa)) are uracil phosphoribosyltransferase. Residues lysine 264, arginine 273, and 307–310 (CKRL) contribute to the GTP site. Positions 317 and 342 each coordinate 5-phospho-alpha-D-ribose 1-diphosphate. Arginine 362 contributes to the GTP binding site. Residues aspartate 368, 373-376 (SGYS), and glutamate 439 each bind 5-phospho-alpha-D-ribose 1-diphosphate. Residue 438–440 (GEF) participates in uracil binding.

In the N-terminal section; belongs to the uridine kinase family. It in the C-terminal section; belongs to the UPRTase family. Requires Mg(2+) as cofactor.

It catalyses the reaction UMP + diphosphate = 5-phospho-alpha-D-ribose 1-diphosphate + uracil. The enzyme catalyses cytidine + ATP = CMP + ADP + H(+). It carries out the reaction uridine + ATP = UMP + ADP + H(+). It functions in the pathway pyrimidine metabolism; UMP biosynthesis via salvage pathway; UMP from uracil: step 1/1. It participates in pyrimidine metabolism; CTP biosynthesis via salvage pathway; CTP from cytidine: step 1/3. Its pathway is pyrimidine metabolism; UMP biosynthesis via salvage pathway; UMP from uridine: step 1/1. Allosterically activated by GTP. Involved in the pyrimidine salvage pathway. The chain is Uridine kinase-like protein 5 (UKL5) from Arabidopsis thaliana (Mouse-ear cress).